We begin with the raw amino-acid sequence, 257 residues long: BTB/POZ domain-containing protein kctd15-like (257 aa).

2 positions are modified to phosphoserine: Ser-9 and Ser-12. A BTB domain is found at Ala-30–Glu-100.

The protein is BTB/POZ domain-containing protein kctd15-like (kctd15l) of Danio rerio (Zebrafish).